Reading from the N-terminus, the 282-residue chain is Undecaprenyl-diphosphatase (282 aa).

The next 5 membrane-spanning stretches (helical) occupy residues Tyr90–Phe110, Leu121–Val141, Phe194–Ala214, Gln228–Leu248, and Met256–Thr276.

The protein belongs to the UppP family.

It is found in the cell membrane. The catalysed reaction is di-trans,octa-cis-undecaprenyl diphosphate + H2O = di-trans,octa-cis-undecaprenyl phosphate + phosphate + H(+). In terms of biological role, catalyzes the dephosphorylation of undecaprenyl diphosphate (UPP). Confers resistance to bacitracin. The polypeptide is Undecaprenyl-diphosphatase (Mycobacterium tuberculosis (strain ATCC 25618 / H37Rv)).